We begin with the raw amino-acid sequence, 226 residues long: MDFRTLAKRIIMTLLALLILPYLLIPVYALPFIRPVSTLMLADLVTLQGYDRRWVPLEDISPRLVQSVMMSEDGQFCFHGGVDWNQMQSVVSNALDGASTRGASTIPMQTAKNLFLWNGRSFLRKGLELPLAIAADFVWSKKRMMEIYLNVAEWGPGIYGIEAAAQHHFKIPAAKLSSRQAALLAVSLPNPIDRVASKPGRGLQRLAGLIERRARASGGYVGCVLD.

The helical transmembrane segment at 10–30 (IIMTLLALLILPYLLIPVYAL) threads the bilayer.

The protein belongs to the glycosyltransferase 51 family.

It localises to the cell inner membrane. The enzyme catalyses [GlcNAc-(1-&gt;4)-Mur2Ac(oyl-L-Ala-gamma-D-Glu-L-Lys-D-Ala-D-Ala)](n)-di-trans,octa-cis-undecaprenyl diphosphate + beta-D-GlcNAc-(1-&gt;4)-Mur2Ac(oyl-L-Ala-gamma-D-Glu-L-Lys-D-Ala-D-Ala)-di-trans,octa-cis-undecaprenyl diphosphate = [GlcNAc-(1-&gt;4)-Mur2Ac(oyl-L-Ala-gamma-D-Glu-L-Lys-D-Ala-D-Ala)](n+1)-di-trans,octa-cis-undecaprenyl diphosphate + di-trans,octa-cis-undecaprenyl diphosphate + H(+). The protein operates within cell wall biogenesis; peptidoglycan biosynthesis. Functionally, peptidoglycan polymerase that catalyzes glycan chain elongation from lipid-linked precursors. This is Biosynthetic peptidoglycan transglycosylase from Agrobacterium fabrum (strain C58 / ATCC 33970) (Agrobacterium tumefaciens (strain C58)).